Reading from the N-terminus, the 35-residue chain is GVPGDVHDEQKQHDINFLLFKVYEVLXDIXLKXVA.

The protein belongs to the tyrosinase family. Hemocyanin subfamily. In terms of tissue distribution, hemolymph.

It is found in the secreted. The protein localises to the extracellular space. Functionally, hemocyanins are copper-containing oxygen carriers occurring freely dissolved in the hemolymph of many mollusks and arthropods. The sequence is that of Hemocyanin A chain from Cherax destructor (Common yabby crayfish).